The following is an 819-amino-acid chain: DNA replication licensing factor Mcm3 (819 aa).

An MCM domain is found at 290-496 (IFELLSKSLA…DVDQMISDHV (207 aa)). Residues Gln-348, Leu-388, Glu-389, Ala-390, and Ala-392 each contribute to the ADP site. The Arginine finger motif lies at 472–475 (SRFD). Ser-522 is subject to Phosphoserine. Tyr-538 is subject to Phosphotyrosine. The interval 655-717 (DRPSKRRRNS…DAGDLTRRET (63 aa)) is disordered. 4 positions are modified to phosphoserine: Ser-664, Ser-666, Ser-680, and Ser-682. Residues Thr-690 and Thr-692 each carry the phosphothreonine modification. Phosphoserine occurs at positions 697, 735, and 739.

This sequence belongs to the MCM family. As to quaternary structure, component of the Mcm2-7 complex. The complex forms a toroidal hexameric ring with the proposed subunit order Mcm2-Mcm6-Mcm4-Mcm7-Mcm3-Mcm5.

Its subcellular location is the nucleus. The protein resides in the chromosome. The enzyme catalyses ATP + H2O = ADP + phosphate + H(+). Functionally, acts as a component of the Mcm2-7 complex (Mcm complex) (Mcm complex) which is the putative replicative helicase essential for 'once per cell cycle' DNA replication initiation and elongation in eukaryotic cells. Core component of CDC45-MCM-GINS (CMG) helicase, the molecular machine that unwinds template DNA during replication, and around which the replisome is built. The active ATPase sites in the Mcm2-7 ring are formed through the interaction surfaces of two neighboring subunits such that a critical structure of a conserved arginine finger motif is provided in trans relative to the ATP-binding site of the Walker A box of the adjacent subunit. The six ATPase active sites, however, are likely to contribute differentially to the complex helicase activity. In Drosophila melanogaster (Fruit fly), this protein is DNA replication licensing factor Mcm3 (Mcm3).